The sequence spans 297 residues: Release factor glutamine methyltransferase (297 aa).

Residues 134–138, D157, and N200 each bind S-adenosyl-L-methionine; that span reads GTGSG. 200–203 provides a ligand contact to substrate; it reads NPPY.

Belongs to the protein N5-glutamine methyltransferase family. PrmC subfamily.

It carries out the reaction L-glutaminyl-[peptide chain release factor] + S-adenosyl-L-methionine = N(5)-methyl-L-glutaminyl-[peptide chain release factor] + S-adenosyl-L-homocysteine + H(+). In terms of biological role, methylates the class 1 translation termination release factors RF1/PrfA and RF2/PrfB on the glutamine residue of the universally conserved GGQ motif. In Bradyrhizobium diazoefficiens (strain JCM 10833 / BCRC 13528 / IAM 13628 / NBRC 14792 / USDA 110), this protein is Release factor glutamine methyltransferase.